We begin with the raw amino-acid sequence, 347 residues long: MSTEVRLTQYSHGAGCGCKISPKVLETILHSEQEKFLDPHLLVGNETRDDAAVYDIGNGTGIISTTDFFMPIVDDPFDFGRIAATNAISDIYAMGGKPIMAIAILGWPIDKLAPEIARKVIEGGRAACKEAGIVLAGGHSIDAPEPIFGLAVTGIVNIDRVKQNSAAKVGSQLFLTKPLGIGVLTTAEKKGLLLPEHQGIAIETMCRLNKLGMDFAEVAGITAMTDVTGFGLLGHLSEICAGSGVQATLHFAKVPKLPEVESYIAKGCVPGGTGRNFDSYGHLIGEMTELQRKLLCDPQTSGGLLLAVLPEAMDEVKAIARCHGIELTAIGELSEQQSGRVLIEVNE.

Residue Cys16 is part of the active site. Residues Lys19 and 47-49 (TRD) contribute to the ATP site. Asp50 contacts Mg(2+). Residues Asp67, Asp90, and 138-140 (GHS) each bind ATP. Asp90 contributes to the Mg(2+) binding site. Mg(2+) is bound at residue Asp226.

Belongs to the selenophosphate synthase 1 family. Class I subfamily. In terms of assembly, homodimer. Mg(2+) serves as cofactor.

It catalyses the reaction hydrogenselenide + ATP + H2O = selenophosphate + AMP + phosphate + 2 H(+). In terms of biological role, synthesizes selenophosphate from selenide and ATP. This chain is Selenide, water dikinase, found in Photorhabdus laumondii subsp. laumondii (strain DSM 15139 / CIP 105565 / TT01) (Photorhabdus luminescens subsp. laumondii).